The primary structure comprises 199 residues: Mediator of RNA polymerase II transcription subunit 29 (199 aa).

Low complexity predominate over residues 1–17 (MAAPQPQAAAVSSASGV). The disordered stretch occupies residues 1 to 47 (MAAPQPQAAAVSSASGVSGPGSAGGPGPQQQPQPTQLVGSAQSGLLQ). Ala2 carries the post-translational modification N-acetylalanine. Residues 18 to 27 (SGPGSAGGPG) show a composition bias toward gly residues. A compositionally biased stretch (low complexity) spans 28–47 (PQQQPQPTQLVGSAQSGLLQ).

It belongs to the Mediator complex subunit 29 family. Component of the Mediator complex, which is composed of MED1, MED4, MED6, MED7, MED8, MED9, MED10, MED11, MED12, MED13, MED13L, MED14, MED15, MED16, MED17, MED18, MED19, MED20, MED21, MED22, MED23, MED24, MED25, MED26, MED27, MED29, MED30, MED31, CCNC, CDK8 and CDC2L6/CDK11. The MED12, MED13, CCNC and CDK8 subunits form a distinct module termed the CDK8 module. Mediator containing the CDK8 module is less active than Mediator lacking this module in supporting transcriptional activation. Individual preparations of the Mediator complex lacking one or more distinct subunits have been variously termed ARC, CRSP, DRIP, PC2, SMCC and TRAP. Associates with the MED18/MED20 heteromer.

The protein localises to the nucleus. In terms of biological role, component of the Mediator complex, a coactivator involved in the regulated transcription of nearly all RNA polymerase II-dependent genes. Mediator functions as a bridge to convey information from gene-specific regulatory proteins to the basal RNA polymerase II transcription machinery. Mediator is recruited to promoters by direct interactions with regulatory proteins and serves as a scaffold for the assembly of a functional preinitiation complex with RNA polymerase II and the general transcription factors. This is Mediator of RNA polymerase II transcription subunit 29 (Med29) from Mus musculus (Mouse).